A 209-amino-acid polypeptide reads, in one-letter code: Ribosomal RNA large subunit methyltransferase E (209 aa).

S-adenosyl-L-methionine contacts are provided by Gly-63, Trp-65, Asp-83, Asp-99, and Asp-124. Lys-164 serves as the catalytic Proton acceptor.

It belongs to the class I-like SAM-binding methyltransferase superfamily. RNA methyltransferase RlmE family.

Its subcellular location is the cytoplasm. It catalyses the reaction uridine(2552) in 23S rRNA + S-adenosyl-L-methionine = 2'-O-methyluridine(2552) in 23S rRNA + S-adenosyl-L-homocysteine + H(+). Functionally, specifically methylates the uridine in position 2552 of 23S rRNA at the 2'-O position of the ribose in the fully assembled 50S ribosomal subunit. The protein is Ribosomal RNA large subunit methyltransferase E of Alkalilimnicola ehrlichii (strain ATCC BAA-1101 / DSM 17681 / MLHE-1).